A 65-amino-acid chain; its full sequence is Large ribosomal subunit protein bL35 (65 aa).

It belongs to the bacterial ribosomal protein bL35 family.

The sequence is that of Large ribosomal subunit protein bL35 from Thermoanaerobacter pseudethanolicus (strain ATCC 33223 / 39E) (Clostridium thermohydrosulfuricum).